Here is an 88-residue protein sequence, read N- to C-terminus: Serine protease inhibitor Kazal-type 11 (88 aa).

A signal peptide spans 1–24 (MSSTWIKFLFILTLVLLPYFVAES). Residues 32–87 (LRKVPNCTLYKSESDCSRTLIPVCADNQMTYYNACYFCLEQLVSPIKYKYHGICTK) form the Kazal-like domain. Residue Asn-37 is glycosylated (N-linked (GlcNAc...) asparagine). Disulfide bonds link Cys-38–Cys-69, Cys-47–Cys-66, and Cys-55–Cys-85.

In terms of tissue distribution, expressed in epydiymis, in the caput. Also expressed in seminal vesicles.

It is found in the secreted. Functionally, probable serine protease inhibitor. This is Serine protease inhibitor Kazal-type 11 (Spink11) from Mus musculus (Mouse).